Consider the following 962-residue polypeptide: Translation initiation factor IF-2 (962 aa).

Positions 52–77 are enriched in basic and acidic residues; sequence RSHGQADDSSRKKITLTKRETSEIRQ. 2 disordered regions span residues 52–87 and 121–378; these read RSHG…TRTV and AVEE…EPVV. The segment covering 78 to 87 has biased composition (polar residues); the sequence is SDGTGKTRTV. Basic and acidic residues-rich tracts occupy residues 123-183, 197-250, and 267-278; these read EEAR…KAEE, DSSR…EAEA, and PSERKAEEKKAE. A compositionally biased stretch (gly residues) spans 342 to 355; sequence TSGGVGGWRGGPRG. The 170-residue stretch at 462 to 631 folds into the tr-type G domain; the sequence is PRPPVVTVMG…LLQAEVLELT (170 aa). Residues 471–478 form a G1 region; it reads GHVDHGKT. Position 471 to 478 (471 to 478) interacts with GTP; sequence GHVDHGKT. The tract at residues 496–500 is G2; that stretch reads GITQH. The G3 stretch occupies residues 517–520; that stretch reads DTPG. Residues 517 to 521 and 571 to 574 each bind GTP; these read DTPGH and NKID. Residues 571-574 are G4; it reads NKID. The G5 stretch occupies residues 607–609; that stretch reads SAK.

It belongs to the TRAFAC class translation factor GTPase superfamily. Classic translation factor GTPase family. IF-2 subfamily.

The protein resides in the cytoplasm. Functionally, one of the essential components for the initiation of protein synthesis. Protects formylmethionyl-tRNA from spontaneous hydrolysis and promotes its binding to the 30S ribosomal subunits. Also involved in the hydrolysis of GTP during the formation of the 70S ribosomal complex. The sequence is that of Translation initiation factor IF-2 from Cupriavidus necator (strain ATCC 17699 / DSM 428 / KCTC 22496 / NCIMB 10442 / H16 / Stanier 337) (Ralstonia eutropha).